A 696-amino-acid chain; its full sequence is D-(-)-3-hydroxybutyrate oligomer hydrolase (696 aa).

Residues 1–20 form the signal peptide; that stretch reads MTRLGWGRRMVFGAALAAVA. The active-site Charge relay system is the serine 309.

This sequence belongs to the D-(-)-3-hydroxybutyrate oligomer hydrolase family.

Its subcellular location is the secreted. The enzyme catalyses (3R)-hydroxybutanoate dimer + H2O = 2 (R)-3-hydroxybutanoate + H(+). The protein operates within lipid metabolism; butanoate metabolism. Functionally, participates in the degradation of poly-3-hydroxybutyrate (PHB). It works downstream of poly(3-hydroxybutyrate) depolymerase, hydrolyzing D(-)-3-hydroxybutyrate oligomers of various length (3HB-oligomers) into 3HB-monomers. The protein is D-(-)-3-hydroxybutyrate oligomer hydrolase of Burkholderia lata (strain ATCC 17760 / DSM 23089 / LMG 22485 / NCIMB 9086 / R18194 / 383).